We begin with the raw amino-acid sequence, 174 residues long: CD164 sialomucin-like 2 protein (174 aa).

The signal sequence occupies residues 1 to 29; the sequence is MEAPGPRALRTALCGGCCCLLLCAQLAVA. Over 30 to 141 the chain is Extracellular; it reads GKGARGFGRG…AHSPGFDGAS (112 aa). N-linked (GlcNAc...) asparagine glycans are attached at residues N71 and N103. A helical transmembrane segment spans residues 142–162; the sequence is FIGGVVLVLSLQAVAFFVLHF. Topologically, residues 163–174 are cytoplasmic; sequence LKAKDSTYQTLI.

This sequence belongs to the CD164 family.

Its subcellular location is the membrane. This is CD164 sialomucin-like 2 protein (CD164L2) from Homo sapiens (Human).